Here is a 472-residue protein sequence, read N- to C-terminus: 2-methylcitrate synthase, mitochondrial (472 aa).

Residues 1–29 (MALNLTSSRRALGSLKPLTRAAFSGVRGY) constitute a mitochondrion transit peptide. 2 residues coordinate CoA: arginine 75 and lysine 193. Residue histidine 271 participates in oxaloacetate binding. Leucine 306 serves as a coordination point for CoA. The active site involves histidine 307. Residues valine 348, glycine 350, and tyrosine 351 each coordinate CoA. Oxaloacetate-binding residues include histidine 353 and arginine 362. Histidine 353 is an active-site residue. The CoA site is built by threonine 402, lysine 403, and asparagine 408. The active site involves aspartate 410. Oxaloacetate-binding residues include arginine 436 and arginine 456.

It belongs to the citrate synthase family. As to quaternary structure, homodimer.

The protein localises to the mitochondrion matrix. The catalysed reaction is propanoyl-CoA + oxaloacetate + H2O = (2S,3S)-2-methylcitrate + CoA + H(+). It carries out the reaction oxaloacetate + acetyl-CoA + H2O = citrate + CoA + H(+). It functions in the pathway organic acid metabolism; propanoate degradation. Functionally, component of the methylcitrate cycle that catalyzes the synthesis of (2S,3S)-2-methylcitrate from propionyl-CoA and oxaloacetate. Plays an important role in detoxification of propionyl-CoA, an inhibitor of both primary and secondary metabolism. Also has citrate synthase activity using as substrates acetyl-CoA and oxaloacetate. The chain is 2-methylcitrate synthase, mitochondrial from Gibberella moniliformis (Maize ear and stalk rot fungus).